A 215-amino-acid polypeptide reads, in one-letter code: MGDYDSDDEKSQVEKLRHAKVPRGMFVSGWDDDADELIEEDKNPQSSIERMILWAVNENRISEVREILKLDADTVNAKDNDGYTPLHRAAYNNFVDMAKLLLQYHANPNARTELGWTPLHSACKWNNADCAHLLLQFGADVNAESDGKQTPLHITATVSNCRNTATVLLLDRYIQPRKENNSEELASVIARRTGMSFPIFESGEEAYDCETGLID.

ANK repeat units lie at residues 81–110 (DGYT…NPNA) and 114–143 (LGWT…DVNA).

In terms of assembly, interacts with Bdbt; interaction promotes the stability of both complex members.

The protein localises to the cytoplasm. The protein resides in the cytosol. Its subcellular location is the cell membrane. Its function is as follows. Required for regulating the establishment of planar cell polarity in the wing. Forms a complex with Bdbt which likely functions in the regulation of planar polarity by promoting the activity of Dco during planar polarity establishment. Within the complex, probably functions to stabilize Bdbt, while Bdbt directly promotes Dco activity in regulating phosphorylation of core proteins such as dsh, and asymmetric localization. The polypeptide is Ankyrin repeat domain-containing protein 49 (Drosophila melanogaster (Fruit fly)).